A 237-amino-acid chain; its full sequence is Opacity protein opA57 (237 aa).

Ala-1 is a signal peptide.

This sequence belongs to the opacity porin family.

It is found in the cell outer membrane. In terms of biological role, implicated in a number of adherence functions. OPA proteins are implicated in pathogenesis and are subject to phase variation. The sequence is that of Opacity protein opA57 (opaK) from Neisseria gonorrhoeae.